Reading from the N-terminus, the 122-residue chain is WUSCHEL-related homeobox 7 (122 aa).

Positions 25 to 89 (AKCGRWNPTV…NHKARERQKC (65 aa)) form a DNA-binding region, homeobox; WUS-type. The span at 98 to 111 (DHRQDTDLSKPRRD) shows a compositional bias: basic and acidic residues. A disordered region spans residues 98 to 122 (DHRQDTDLSKPRRDNVRRHQLPAKG). A compositionally biased stretch (basic residues) spans 112–122 (NVRRHQLPAKG).

The protein belongs to the WUS homeobox family.

It is found in the nucleus. Potential transcription factor that plays a central role during developmental processes. This Arabidopsis thaliana (Mouse-ear cress) protein is WUSCHEL-related homeobox 7 (WOX7).